A 396-amino-acid polypeptide reads, in one-letter code: Purine ribonucleoside efflux pump NepI (396 aa).

The Cytoplasmic segment spans residues 1–21 (MSEFIAENRGADAITRPNWSA). Residues 22 to 42 (VFSVAFCVACLIIVEFLPVSL) traverse the membrane as a helical segment. Residues 43–54 (LTPMAQDLGISE) are Periplasmic-facing. Residues 55–75 (GVAGQSVTVTAFVAMFASLFI) form a helical membrane-spanning segment. Residues 76–85 (TQTIQATDRR) lie on the Cytoplasmic side of the membrane. The chain crosses the membrane as a helical span at residues 86-106 (NVVILFAVLLTLSCLLVSFAN). Position 107 (S107) is a topological domain, periplasmic. A helical transmembrane segment spans residues 108–128 (FSLLLIGRACLGLALGGFWAM). Residues 129-147 (SASLTMRLVPPRTVPKALS) lie on the Cytoplasmic side of the membrane. The helical transmembrane segment at 148–168 (VIFGAVSIALVIAAPLGSFLG) threads the bilayer. The Periplasmic portion of the chain corresponds to 169 to 175 (ELIGWRN). A helical membrane pass occupies residues 176 to 196 (VFNAAAVMGVLCIFWIIKSLP). At 197-215 (SLPGEPSHQKQNTFRLLQR) the chain is on the cytoplasmic side. Residues 216–236 (PGVMAGMIAIFMSFAGQFAFF) form a helical membrane-spanning segment. At 237 to 255 (TYIRPVYMNLAGFSVDGLT) the chain is on the periplasmic side. Residues 256-276 (LVLLSFGIASFIGTSLSSFIL) form a helical membrane-spanning segment. Topologically, residues 277 to 281 (KRSVK) are cytoplasmic. A helical transmembrane segment spans residues 282–302 (LALAGAPLILAVSALVLTLWG). The Periplasmic portion of the chain corresponds to 303 to 305 (SDK). A helical transmembrane segment spans residues 306–326 (IVATGVAIIWGLTFALVPVGW). Topologically, residues 327-343 (STWITRSLADQAEKAGS) are cytoplasmic. Residues 344-364 (IQVAVIQLANTCGAAIGGYAL) traverse the membrane as a helical segment. Topologically, residues 365–366 (DN) are periplasmic. A helical transmembrane segment spans residues 367-387 (IGLTSPLMFSGTLMLLTALLV). The Cytoplasmic segment spans residues 388–396 (TAKVKMKKS).

The protein belongs to the major facilitator superfamily. DHA1 family. NepI (TC 2.A.1.2.26) subfamily.

The protein resides in the cell inner membrane. It carries out the reaction inosine(in) + H(+)(out) = inosine(out) + H(+)(in). The catalysed reaction is guanosine(in) + H(+)(out) = guanosine(out) + H(+)(in). In terms of biological role, involved in the efflux of purine ribonucleosides, such as inosine and guanosine. The chain is Purine ribonucleoside efflux pump NepI from Shigella sonnei (strain Ss046).